Here is a 162-residue protein sequence, read N- to C-terminus: F protein (162 aa).

Residues 1-23 form a disordered region; that stretch reads MSTNPKPQKKKTNVTPTVAHRTS. Polar residues predominate over residues 13 to 23; sequence NVTPTVAHRTS.

The protein localises to the host cytoplasm. It is found in the host perinuclear region. In Hepatitis C virus genotype 1a (isolate 1) (HCV), this protein is F protein.